The primary structure comprises 316 residues: MNFKKGEVILAPMASYTHSAFRRLCRRLGADRTYTELISAVGVLRNGIPMKLAYFTEEERPIHIQVFGSNPEEIAQASVVIAKELKPDFIDINFGCSVPKVLRNKAAGYMLQCPPLMGEVVKETVEALKPYGIPVSAKIRLGFEKDEVERIVEELQKAGVSLIAIHARTAKQGFSGKALWHRIKEAKKVASVPIIGSGDVKSWRDIERMFEETECDGVMVGRAALSNPWIFKEFKEKRDIEVGLKERMDFILEELSMMTEYMSREKACAEIKSQIVQILKGVPNSRELKTYIVHAENCKELVKRIEEAKERELLYA.

FMN is bound by residues 12-14 (PMA) and glutamine 65. The active-site Proton donor is the cysteine 96. FMN-binding positions include lysine 138, 197 to 199 (SGD), and 221 to 222 (GR).

Belongs to the Dus family. FMN is required as a cofactor.

The enzyme catalyses a 5,6-dihydrouridine in tRNA + NAD(+) = a uridine in tRNA + NADH + H(+). It catalyses the reaction a 5,6-dihydrouridine in tRNA + NADP(+) = a uridine in tRNA + NADPH + H(+). Its function is as follows. Catalyzes the synthesis of 5,6-dihydrouridine (D), a modified base found in the D-loop of most tRNAs, via the reduction of the C5-C6 double bond in target uridines. The chain is Probable tRNA-dihydrouridine synthase (dus) from Aquifex aeolicus (strain VF5).